Consider the following 476-residue polypeptide: Adenosylhomocysteinase (476 aa).

Positions 62, 141, and 201 each coordinate substrate. 202-204 (TTT) contributes to the NAD(+) binding site. Substrate is bound by residues lysine 231 and aspartate 235. NAD(+)-binding positions include asparagine 236, 265 to 270 (GYGDVG), glutamate 288, asparagine 323, 344 to 346 (IGH), and asparagine 389.

Belongs to the adenosylhomocysteinase family. NAD(+) is required as a cofactor.

The protein localises to the cytoplasm. It catalyses the reaction S-adenosyl-L-homocysteine + H2O = L-homocysteine + adenosine. The protein operates within amino-acid biosynthesis; L-homocysteine biosynthesis; L-homocysteine from S-adenosyl-L-homocysteine: step 1/1. In terms of biological role, may play a key role in the regulation of the intracellular concentration of adenosylhomocysteine. The polypeptide is Adenosylhomocysteinase (Delftia acidovorans (strain DSM 14801 / SPH-1)).